A 274-amino-acid polypeptide reads, in one-letter code: Large ribosomal subunit protein uL2 (274 aa).

2 disordered regions span residues 28-59 (APYA…GGHK) and 222-274 (GAAM…RRTK). A compositionally biased stretch (polar residues) spans 39–49 (KSGGRNNNGRI). The segment covering 229 to 239 (DHPHGGGEGRS) has biased composition (basic and acidic residues).

The protein belongs to the universal ribosomal protein uL2 family. Part of the 50S ribosomal subunit. Forms a bridge to the 30S subunit in the 70S ribosome.

Functionally, one of the primary rRNA binding proteins. Required for association of the 30S and 50S subunits to form the 70S ribosome, for tRNA binding and peptide bond formation. It has been suggested to have peptidyltransferase activity; this is somewhat controversial. Makes several contacts with the 16S rRNA in the 70S ribosome. In Marinomonas sp. (strain MWYL1), this protein is Large ribosomal subunit protein uL2.